Consider the following 402-residue polypeptide: Phosphoglycerate kinase (402 aa).

Substrate contacts are provided by residues 24–26 (DFN), arginine 40, 63–66 (HFGR), arginine 122, and arginine 155. Residues lysine 206, glycine 297, glutamate 328, and 357 to 360 (GGDS) each bind ATP.

The protein belongs to the phosphoglycerate kinase family. In terms of assembly, monomer.

The protein localises to the cytoplasm. It catalyses the reaction (2R)-3-phosphoglycerate + ATP = (2R)-3-phospho-glyceroyl phosphate + ADP. The protein operates within carbohydrate degradation; glycolysis; pyruvate from D-glyceraldehyde 3-phosphate: step 2/5. The polypeptide is Phosphoglycerate kinase (Synechococcus sp. (strain WH7803)).